We begin with the raw amino-acid sequence, 589 residues long: Protein drl-1 (589 aa).

The interval 1–51 (MHSEEKYLHIPNNTKYPEIIVEEEEEDPSEEERSELSETDDVATPLRPSDT) is disordered. Positions 20 to 41 (IVEEEEEDPSEEERSELSETDD) are enriched in acidic residues. The region spanning 97–373 (WRINEDVMKD…QNLLESHGSK (277 aa)) is the Protein kinase domain. The next 3 membrane-spanning stretches (helical) occupy residues 429–449 (GFIP…VLLV), 456–476 (LCAA…IFLI), and 491–511 (GFVV…TTLC).

This sequence belongs to the protein kinase superfamily. STE Ser/Thr protein kinase family. In terms of tissue distribution, expressed in vulval and body wall muscles, hypodermis, seam cells and tissues next to pharynx and anus.

The protein resides in the membrane. Its function is as follows. Negatively regulates lifespan and health span probably by participating in nutrient sensing. The protein is Protein drl-1 of Caenorhabditis elegans.